We begin with the raw amino-acid sequence, 202 residues long: Na(+)-translocating NADH-quinone reductase subunit E (202 aa).

6 consecutive transmembrane segments (helical) span residues S11 to V31, M39 to L59, L79 to E99, G114 to V134, V144 to I164, and L180 to I200.

Belongs to the NqrDE/RnfAE family. In terms of assembly, composed of six subunits; NqrA, NqrB, NqrC, NqrD, NqrE and NqrF.

It is found in the cell inner membrane. The catalysed reaction is a ubiquinone + n Na(+)(in) + NADH + H(+) = a ubiquinol + n Na(+)(out) + NAD(+). Its function is as follows. NQR complex catalyzes the reduction of ubiquinone-1 to ubiquinol by two successive reactions, coupled with the transport of Na(+) ions from the cytoplasm to the periplasm. NqrA to NqrE are probably involved in the second step, the conversion of ubisemiquinone to ubiquinol. The polypeptide is Na(+)-translocating NADH-quinone reductase subunit E (Maridesulfovibrio salexigens (strain ATCC 14822 / DSM 2638 / NCIMB 8403 / VKM B-1763) (Desulfovibrio salexigens)).